We begin with the raw amino-acid sequence, 437 residues long: Adenylosuccinate synthetase (437 aa).

GTP is bound by residues 25–31, 53–55, and lysine 62; these read GDEGKGK and GHT. Residue aspartate 26 is the Proton acceptor of the active site. Mg(2+)-binding residues include aspartate 26 and glycine 53. Residues 26-29 and 51-54 each bind IMP; these read DEGK and NAGH. Residue histidine 54 is the Proton donor of the active site. Threonine 141, arginine 155, asparagine 232, and threonine 247 together coordinate IMP. Threonine 307 contributes to the GTP binding site. 307-313 contacts substrate; the sequence is TTTKRPR. Arginine 311 lines the IMP pocket. GTP is bound by residues arginine 313, 339–341, and 425–427; these read KLD and GVG.

It belongs to the adenylosuccinate synthetase family. In terms of assembly, homodimer. Mg(2+) serves as cofactor.

Its subcellular location is the cytoplasm. It catalyses the reaction IMP + L-aspartate + GTP = N(6)-(1,2-dicarboxyethyl)-AMP + GDP + phosphate + 2 H(+). It functions in the pathway purine metabolism; AMP biosynthesis via de novo pathway; AMP from IMP: step 1/2. In terms of biological role, plays an important role in the salvage pathway for purine nucleotide biosynthesis. Catalyzes the first committed step in the biosynthesis of AMP from IMP. In Plasmodium knowlesi (strain H), this protein is Adenylosuccinate synthetase.